We begin with the raw amino-acid sequence, 155 residues long: Small ribosomal subunit protein uS7 (155 aa).

Belongs to the universal ribosomal protein uS7 family. As to quaternary structure, part of the 30S ribosomal subunit. Contacts proteins S9 and S11.

One of the primary rRNA binding proteins, it binds directly to 16S rRNA where it nucleates assembly of the head domain of the 30S subunit. Is located at the subunit interface close to the decoding center, probably blocks exit of the E-site tRNA. The sequence is that of Small ribosomal subunit protein uS7 from Mycoplasma pneumoniae (strain ATCC 29342 / M129 / Subtype 1) (Mycoplasmoides pneumoniae).